A 406-amino-acid chain; its full sequence is Elongation factor Tu, chloroplastic (406 aa).

Residues Lys-8–Lys-210 enclose the tr-type G domain. GTP contacts are provided by residues Gly-17–Thr-24, Asp-77–His-81, and Asn-132–Asp-135. Thr-24 is a Mg(2+) binding site.

Belongs to the TRAFAC class translation factor GTPase superfamily. Classic translation factor GTPase family. EF-Tu/EF-1A subfamily. In terms of assembly, monomer.

The protein resides in the plastid. The protein localises to the chloroplast. The enzyme catalyses GTP + H2O = GDP + phosphate + H(+). In terms of biological role, GTP hydrolase that promotes the GTP-dependent binding of aminoacyl-tRNA to the A-site of ribosomes during protein biosynthesis. The chain is Elongation factor Tu, chloroplastic (tufA) from Chaetosphaeridium globosum (Charophycean green alga).